Consider the following 379-residue polypeptide: Spermidine/putrescine import ATP-binding protein PotA (379 aa).

In terms of domain architecture, ABC transporter spans 10-240; the sequence is VTIDQVSKAY…PATDFVAKFI (231 aa). ATP is bound at residue 42–49; it reads GPSGCGKT.

This sequence belongs to the ABC transporter superfamily. Spermidine/putrescine importer (TC 3.A.1.11.1) family. As to quaternary structure, the complex is composed of two ATP-binding proteins (PotA), two transmembrane proteins (PotB and PotC) and a solute-binding protein (PotD).

The protein localises to the cell inner membrane. It catalyses the reaction ATP + H2O + polyamine-[polyamine-binding protein]Side 1 = ADP + phosphate + polyamineSide 2 + [polyamine-binding protein]Side 1.. Part of the ABC transporter complex PotABCD involved in spermidine/putrescine import. Responsible for energy coupling to the transport system. The sequence is that of Spermidine/putrescine import ATP-binding protein PotA from Treponema pallidum (strain Nichols).